We begin with the raw amino-acid sequence, 152 residues long: Putative pre-16S rRNA nuclease (152 aa).

It belongs to the YqgF nuclease family.

The protein localises to the cytoplasm. Could be a nuclease involved in processing of the 5'-end of pre-16S rRNA. This is Putative pre-16S rRNA nuclease from Sphingopyxis alaskensis (strain DSM 13593 / LMG 18877 / RB2256) (Sphingomonas alaskensis).